The primary structure comprises 288 residues: Bifunctional protein FolD (288 aa).

NADP(+) contacts are provided by residues 166 to 168 (GAS) and I232.

It belongs to the tetrahydrofolate dehydrogenase/cyclohydrolase family. Homodimer.

It catalyses the reaction (6R)-5,10-methylene-5,6,7,8-tetrahydrofolate + NADP(+) = (6R)-5,10-methenyltetrahydrofolate + NADPH. The catalysed reaction is (6R)-5,10-methenyltetrahydrofolate + H2O = (6R)-10-formyltetrahydrofolate + H(+). The protein operates within one-carbon metabolism; tetrahydrofolate interconversion. In terms of biological role, catalyzes the oxidation of 5,10-methylenetetrahydrofolate to 5,10-methenyltetrahydrofolate and then the hydrolysis of 5,10-methenyltetrahydrofolate to 10-formyltetrahydrofolate. The chain is Bifunctional protein FolD from Citrobacter koseri (strain ATCC BAA-895 / CDC 4225-83 / SGSC4696).